An 83-amino-acid polypeptide reads, in one-letter code: Short neurotoxin B (83 aa).

The signal sequence occupies residues 1–21; that stretch reads MKTLLLTLVVVTIVCLDLGYT. Disulfide bonds link Cys-24–Cys-45, Cys-38–Cys-62, Cys-64–Cys-75, and Cys-76–Cys-81.

Belongs to the three-finger toxin family. Short-chain subfamily. Type I alpha-neurotoxin sub-subfamily. In terms of tissue distribution, expressed by the venom gland.

The protein resides in the secreted. In terms of biological role, binds to muscle nicotinic acetylcholine receptor (nAChR) and inhibit acetylcholine from binding to the receptor, thereby impairing neuromuscular transmission. The sequence is that of Short neurotoxin B from Laticauda laticaudata (Blue-ringed sea krait).